We begin with the raw amino-acid sequence, 1073 residues long: Guanylyl cyclase C (1073 aa).

The signal sequence occupies residues 1–23 (MKTPLLALALWSLLLQLGLTFWP). At 24 to 433 (SSVSQNCHNG…IPGRGPQILM (410 aa)) the chain is on the extracellular side. N32, N43, N79, N195, N284, N307, and N402 each carry an N-linked (GlcNAc...) asparagine glycan. Residues 434-454 (IAVFTLTGTIVLLLLIALLVL) form a helical membrane-spanning segment. Over 455-1073 (RKYKREYALR…NTTDNESTHF (619 aa)) the chain is Cytoplasmic. In terms of domain architecture, Protein kinase spans 489 to 749 (LKIDDDRRRD…KIENTLAKIF (261 aa)). The 131-residue stretch at 824-954 (TIYFSDIVGF…DTVNTASRME (131 aa)) folds into the Guanylate cyclase domain.

The protein belongs to the adenylyl cyclase class-4/guanylyl cyclase family. Homotrimer. Interacts via its C-terminal region with NHERF4. Interacts with the lectin chaperone VIP36. In terms of processing, glycosylation at Asn-79 is required for interaction with VIP36 while glycosylation at Asn-402 modulates ligand-mediated GC-C activation.

It is found in the cell membrane. It localises to the endoplasmic reticulum membrane. The enzyme catalyses GTP = 3',5'-cyclic GMP + diphosphate. Its function is as follows. Guanylyl cyclase that catalyzes synthesis of cyclic GMP (cGMP) from GTP. In Sus scrofa (Pig), this protein is Guanylyl cyclase C (GUCY2C).